The sequence spans 424 residues: Serpin A11 (424 aa).

The signal sequence occupies residues 1 to 21 (MGPVWLWLWLLVAEVLLPVHC). N-linked (GlcNAc...) asparagine glycans are attached at residues N108, N171, N352, and N387.

The protein belongs to the serpin family.

It is found in the secreted. The polypeptide is Serpin A11 (Serpina11) (Mus musculus (Mouse)).